The following is a 105-amino-acid chain: Guanyl-specific ribonuclease U1 (105 aa).

A Pyrrolidone carboxylic acid modification is found at glutamine 1. Cystine bridges form between cysteine 8/cysteine 103 and cysteine 51/cysteine 87. Histidine 37 is an active-site residue. Catalysis depends on glutamate 57, which acts as the Proton acceptor. The active-site Proton donor is the histidine 92.

Belongs to the ribonuclease N1/T1 family.

It catalyses the reaction [RNA] containing guanosine + H2O = an [RNA fragment]-3'-guanosine-3'-phosphate + a 5'-hydroxy-ribonucleotide-3'-[RNA fragment].. The protein is Guanyl-specific ribonuclease U1 of Ustilago sphaerogena (Smut fungus).